The sequence spans 275 residues: ATP synthase subunit delta (275 aa).

It belongs to the ATPase delta chain family. In terms of assembly, F-type ATPases have 2 components, F(1) - the catalytic core - and F(0) - the membrane proton channel. F(1) has five subunits: alpha(3), beta(3), gamma(1), delta(1), epsilon(1). F(0) has three main subunits: a(1), b(2) and c(10-14). The alpha and beta chains form an alternating ring which encloses part of the gamma chain. F(1) is attached to F(0) by a central stalk formed by the gamma and epsilon chains, while a peripheral stalk is formed by the delta and b chains.

The protein resides in the cell membrane. Functionally, f(1)F(0) ATP synthase produces ATP from ADP in the presence of a proton or sodium gradient. F-type ATPases consist of two structural domains, F(1) containing the extramembraneous catalytic core and F(0) containing the membrane proton channel, linked together by a central stalk and a peripheral stalk. During catalysis, ATP synthesis in the catalytic domain of F(1) is coupled via a rotary mechanism of the central stalk subunits to proton translocation. In terms of biological role, this protein is part of the stalk that links CF(0) to CF(1). It either transmits conformational changes from CF(0) to CF(1) or is implicated in proton conduction. This chain is ATP synthase subunit delta, found in Arthrobacter sp. (strain FB24).